Reading from the N-terminus, the 122-residue chain is UPF0382 membrane protein SE_0353 (122 aa).

4 consecutive transmembrane segments (helical) span residues 3-23 (VFII…AFGA), 46-66 (MYHG…SINV), 69-89 (AGWL…FLAL), and 98-118 (ITPI…IATL).

This sequence belongs to the UPF0382 family.

The protein resides in the cell membrane. The sequence is that of UPF0382 membrane protein SE_0353 from Staphylococcus epidermidis (strain ATCC 12228 / FDA PCI 1200).